Consider the following 469-residue polypeptide: Argininosuccinate lyase (469 aa).

This sequence belongs to the lyase 1 family. Argininosuccinate lyase subfamily.

It is found in the cytoplasm. The catalysed reaction is 2-(N(omega)-L-arginino)succinate = fumarate + L-arginine. The protein operates within amino-acid biosynthesis; L-arginine biosynthesis; L-arginine from L-ornithine and carbamoyl phosphate: step 3/3. The chain is Argininosuccinate lyase from Burkholderia cenocepacia (strain HI2424).